Consider the following 349-residue polypeptide: Heat-inducible transcription repressor HrcA (349 aa).

It belongs to the HrcA family.

Functionally, negative regulator of class I heat shock genes (grpE-dnaK-dnaJ and groELS operons). Prevents heat-shock induction of these operons. This is Heat-inducible transcription repressor HrcA from Xylella fastidiosa (strain 9a5c).